The following is a 519-amino-acid chain: Aldehyde dehydrogenase X, mitochondrial (519 aa).

The transit peptide at 1-19 directs the protein to the mitochondrion; that stretch reads MLNARFLVPRLLCLQGRTT. Position 53 is an N6-acetyllysine (K53). At K54 the chain carries N6-acetyllysine; alternate. Residue K54 is modified to N6-succinyllysine; alternate. Position 264–269 (264–269) interacts with NAD(+); sequence GSTEVG. The Proton acceptor role is filled by E287. C321 (nucleophile) is an active-site residue. 4 positions are modified to N6-acetyllysine; alternate: K366, K385, K401, and K428. K366, K385, K401, and K428 each carry N6-succinyllysine; alternate. K431 carries the N6-acetyllysine modification.

Belongs to the aldehyde dehydrogenase family. As to quaternary structure, homotetramer.

The protein localises to the mitochondrion matrix. The enzyme catalyses an aldehyde + NAD(+) + H2O = a carboxylate + NADH + 2 H(+). It participates in alcohol metabolism; ethanol degradation; acetate from ethanol: step 2/2. Functionally, ALDHs play a major role in the detoxification of alcohol-derived acetaldehyde. They are involved in the metabolism of corticosteroids, biogenic amines, neurotransmitters, and lipid peroxidation. The protein is Aldehyde dehydrogenase X, mitochondrial (Aldh1b1) of Rattus norvegicus (Rat).